A 381-amino-acid chain; its full sequence is Alcohol dehydrogenase-like 6 (381 aa).

Zn(2+)-binding residues include C53, S55, H72, C102, C105, C108, C116, and C179. An alcohol is bound by residues S55 and H72. S55 is a binding site for NAD(+). NAD(+)-binding positions include 204 to 209 (GLGTVG), D228, K233, 297 to 299 (LGV), F324, and R374.

Belongs to the zinc-containing alcohol dehydrogenase family. Class-III subfamily. Homodimer. Zn(2+) serves as cofactor.

Its subcellular location is the cytoplasm. It catalyses the reaction a primary alcohol + NAD(+) = an aldehyde + NADH + H(+). It carries out the reaction a secondary alcohol + NAD(+) = a ketone + NADH + H(+). This chain is Alcohol dehydrogenase-like 6, found in Arabidopsis thaliana (Mouse-ear cress).